The chain runs to 694 residues: Polyribonucleotide nucleotidyltransferase (694 aa).

Positions 485 and 491 each coordinate Mg(2+). Residues 552 to 611 (PRIETMQIKPNKIATVIGPGGKQIRQIIEEAGVQIDINDSGLVSISASSPQAIEKAKSII) form the KH domain. Residues 621 to 689 (GKIYEGRVTS…EKGQYKLSHK (69 aa)) enclose the S1 motif domain.

The protein belongs to the polyribonucleotide nucleotidyltransferase family. Mg(2+) is required as a cofactor.

It localises to the cytoplasm. It catalyses the reaction RNA(n+1) + phosphate = RNA(n) + a ribonucleoside 5'-diphosphate. Its function is as follows. Involved in mRNA degradation. Catalyzes the phosphorolysis of single-stranded polyribonucleotides processively in the 3'- to 5'-direction. This Chlamydia abortus (strain DSM 27085 / S26/3) (Chlamydophila abortus) protein is Polyribonucleotide nucleotidyltransferase.